Consider the following 493-residue polypeptide: Ketol-acid reductoisomerase (NADP(+)) (493 aa).

The KARI N-terminal Rossmann domain occupies 17 to 208 (LGKCRFMKRE…GGDRAGVLES (192 aa)). NADP(+)-binding positions include 45–48 (CGAQ), Arg-68, Arg-76, Ser-78, and 108–110 (DKQ). His-132 is an active-site residue. Residue Gly-158 participates in NADP(+) binding. 2 KARI C-terminal knotted domains span residues 209–353 (SFIA…SEQE) and 354–486 (YYDK…MTDM). Mg(2+) is bound by residues Asp-217, Glu-221, Glu-389, and Glu-393. Ser-414 contacts substrate.

It belongs to the ketol-acid reductoisomerase family. Requires Mg(2+) as cofactor.

The enzyme catalyses (2R)-2,3-dihydroxy-3-methylbutanoate + NADP(+) = (2S)-2-acetolactate + NADPH + H(+). The catalysed reaction is (2R,3R)-2,3-dihydroxy-3-methylpentanoate + NADP(+) = (S)-2-ethyl-2-hydroxy-3-oxobutanoate + NADPH + H(+). It participates in amino-acid biosynthesis; L-isoleucine biosynthesis; L-isoleucine from 2-oxobutanoate: step 2/4. The protein operates within amino-acid biosynthesis; L-valine biosynthesis; L-valine from pyruvate: step 2/4. Functionally, involved in the biosynthesis of branched-chain amino acids (BCAA). Catalyzes an alkyl-migration followed by a ketol-acid reduction of (S)-2-acetolactate (S2AL) to yield (R)-2,3-dihydroxy-isovalerate. In the isomerase reaction, S2AL is rearranged via a Mg-dependent methyl migration to produce 3-hydroxy-3-methyl-2-ketobutyrate (HMKB). In the reductase reaction, this 2-ketoacid undergoes a metal-dependent reduction by NADPH to yield (R)-2,3-dihydroxy-isovalerate. The protein is Ketol-acid reductoisomerase (NADP(+)) of Colwellia psychrerythraea (strain 34H / ATCC BAA-681) (Vibrio psychroerythus).